A 1733-amino-acid chain; its full sequence is Probable nuclear antigen (1733 aa).

Disordered regions lie at residues 1-41 (MNLF…THFT), 71-394 (PHPP…EQQV), 437-506 (AGAG…EGAQ), 520-548 (APAA…EGGA), 882-907 (LGGG…GAAL), 993-1141 (AGGP…EDAA), 1223-1242 (PERV…RGHA), 1348-1475 (GAGP…GRAG), 1585-1608 (SGGG…WGSG), and 1630-1665 (PRRR…RGGC). Over residues 21–31 (DHHHQQHHHHP) the composition is skewed to basic residues. Residues 77 to 97 (PQDHHRPTPARDHRDPRDHLP) show a composition bias toward basic and acidic residues. The span at 113-131 (TTTTTIKDPQHPQDPLLLP) shows a compositional bias: low complexity. Residues 135–147 (LQEEDPHLLRPTR) show a composition bias toward basic and acidic residues. Over residues 179 to 189 (GGGPPSPPPRP) the composition is skewed to pro residues. A compositionally biased stretch (low complexity) spans 190–201 (STSSSSSHQGPP). The segment covering 202 to 220 (STRPPPPQRPPPRWPPPSP) has biased composition (pro residues). Over residues 227–240 (RAGSENTAQTLFSH) the composition is skewed to polar residues. Residues 272–299 (PPPSPPPRPPPPLPPPPPPPPPPQPPPA) show a composition bias toward pro residues. Positions 316–326 (GGRRRGGKRRR) are enriched in basic residues. Positions 336–354 (DAEEEEDGDGDEDEDEDRA) are enriched in acidic residues. Over residues 355 to 364 (EGEGREDGGE) the composition is skewed to basic and acidic residues. Composition is skewed to gly residues over residues 365 to 374 (GPRGAGGGAG), 454 to 466 (GAPG…GLEG), and 479 to 494 (GGDG…GLGV). Over residues 495-506 (GLQQRRGAEGAQ) the composition is skewed to low complexity. Positions 882-892 (LGGGGGGGQQR) are enriched in gly residues. Positions 893-907 (GSGVRSGPESEGAAL) are enriched in low complexity. Gly residues-rich tracts occupy residues 993 to 1004 (AGGPGAGEAGGG) and 1027 to 1043 (AGRG…LGEP). Composition is skewed to basic and acidic residues over residues 1078–1087 (GAGDEGDRVR) and 1100–1112 (RVAE…RHLL). Positions 1116–1127 (GPEGGRGAGGRG) are enriched in gly residues. Residues 1385 to 1407 (GPGGLRGRGRGGRGGGGGGGGRG) are compositionally biased toward gly residues. Composition is skewed to basic residues over residues 1408-1420 (PRGR…RRWR) and 1444-1453 (RGGRGGRGGR). Over residues 1454 to 1474 (GRGGGRAPRGGGGGPGGGGRA) the composition is skewed to gly residues. The segment covering 1652-1665 (RGAGRAGGGGRGGC) has biased composition (gly residues).

This Sus scrofa (Pig) protein is Probable nuclear antigen.